Consider the following 346-residue polypeptide: Probable dolichyl-diphosphooligosaccharide--protein glycosyltransferase subunit 3B (346 aa).

Residues 1 to 22 (MALKSKLVSLLFLIATLSSTFA) form the signal peptide. At 23–189 (ASFSDSDSDS…KVGPIQRPPL (167 aa)) the chain is on the lumenal side. N-linked (GlcNAc...) asparagine glycosylation is present at Asn108. Residues 190–210 (LSKPQIGIIVALIVIATPFII) form a helical membrane-spanning segment. At 211 to 225 (KRVLKGETILHDTRL) the chain is on the cytoplasmic side. A helical transmembrane segment spans residues 226–246 (WLSGAIFIYFFSVAGTMHNII). Residues 247 to 277 (RKMPMFLQDRNDPNKLVFFYQGSGMQLGAEG) lie on the Lumenal side of the membrane. A helical membrane pass occupies residues 278 to 298 (FAVGFLYTVVGLLLAFVTNVL). Residues 299–308 (VRVKNITAQR) are Cytoplasmic-facing. A helical membrane pass occupies residues 309-329 (LIMLLALFISFWAVKKVVYLD). Residues 330–346 (NWKTGYGIHPYWPSSWR) are Lumenal-facing.

The protein belongs to the OST3/OST6 family. As to quaternary structure, component of the oligosaccharyltransferase (OST) complex.

It is found in the endoplasmic reticulum membrane. Its function is as follows. Subunit of the oligosaccharyl transferase (OST) complex that catalyzes the initial transfer of a defined glycan (Glc(3)Man(9)GlcNAc(2) in eukaryotes) from the lipid carrier dolichol-pyrophosphate to an asparagine residue within an Asn-X-Ser/Thr consensus motif in nascent polypeptide chains, the first step in protein N-glycosylation. N-glycosylation occurs cotranslationally and the complex associates with the Sec61 complex at the channel-forming translocon complex that mediates protein translocation across the endoplasmic reticulum (ER). All subunits are required for a maximal enzyme activity. The protein is Probable dolichyl-diphosphooligosaccharide--protein glycosyltransferase subunit 3B (OST3B) of Arabidopsis thaliana (Mouse-ear cress).